Reading from the N-terminus, the 228-residue chain is Cytochrome c oxidase subunit 2 (228 aa).

The Mitochondrial intermembrane portion of the chain corresponds to 1 to 26; sequence MATWANLGLQDSSSPLMEQLNFFHDH. Residues 27-48 traverse the membrane as a helical segment; the sequence is TLLILTMITILVGYIMGMLSFN. At 49-62 the chain is on the mitochondrial matrix side; the sequence is KFTNRFLLHGQTIE. Residues 63–82 traverse the membrane as a helical segment; that stretch reads IIWTVLPAIILMFIAFPSLR. Topologically, residues 83 to 228 are mitochondrial intermembrane; it reads LLYLMDEINT…FIKWITSMTN (146 aa). The Cu cation site is built by histidine 161, cysteine 196, glutamate 198, cysteine 200, histidine 204, and methionine 207. Position 198 (glutamate 198) interacts with Mg(2+).

This sequence belongs to the cytochrome c oxidase subunit 2 family. In terms of assembly, component of the cytochrome c oxidase (complex IV, CIV), a multisubunit enzyme composed of a catalytic core of 3 subunits and several supernumerary subunits. The complex exists as a monomer or a dimer and forms supercomplexes (SCs) in the inner mitochondrial membrane with ubiquinol-cytochrome c oxidoreductase (cytochrome b-c1 complex, complex III, CIII). Cu cation serves as cofactor.

The protein localises to the mitochondrion inner membrane. The catalysed reaction is 4 Fe(II)-[cytochrome c] + O2 + 8 H(+)(in) = 4 Fe(III)-[cytochrome c] + 2 H2O + 4 H(+)(out). In terms of biological role, component of the cytochrome c oxidase, the last enzyme in the mitochondrial electron transport chain which drives oxidative phosphorylation. The respiratory chain contains 3 multisubunit complexes succinate dehydrogenase (complex II, CII), ubiquinol-cytochrome c oxidoreductase (cytochrome b-c1 complex, complex III, CIII) and cytochrome c oxidase (complex IV, CIV), that cooperate to transfer electrons derived from NADH and succinate to molecular oxygen, creating an electrochemical gradient over the inner membrane that drives transmembrane transport and the ATP synthase. Cytochrome c oxidase is the component of the respiratory chain that catalyzes the reduction of oxygen to water. Electrons originating from reduced cytochrome c in the intermembrane space (IMS) are transferred via the dinuclear copper A center (CU(A)) of subunit 2 and heme A of subunit 1 to the active site in subunit 1, a binuclear center (BNC) formed by heme A3 and copper B (CU(B)). The BNC reduces molecular oxygen to 2 water molecules using 4 electrons from cytochrome c in the IMS and 4 protons from the mitochondrial matrix. The chain is Cytochrome c oxidase subunit 2 (COII) from Anopheles gambiae (African malaria mosquito).